The chain runs to 140 residues: CDGSH iron-sulfur domain-containing protein 2 homolog (140 aa).

The Lumenal portion of the chain corresponds to 1–35 (MEAIAKLIKVQLPNYLQKLPVPSSLSGFAELSPSD). A helical transmembrane segment spans residues 36–59 (AIAVVFPFAVVSWLIGYSTYKFFQ). Residues 60–140 (PKAVELPPSP…GPLIVKGKAN (81 aa)) are Cytoplasmic-facing. Positions 104, 106, 115, and 119 each coordinate [2Fe-2S] cluster.

It belongs to the CISD protein family. CISD2 subfamily. [2Fe-2S] cluster is required as a cofactor.

Its subcellular location is the endoplasmic reticulum membrane. In Trichoplax adhaerens (Trichoplax reptans), this protein is CDGSH iron-sulfur domain-containing protein 2 homolog.